A 684-amino-acid polypeptide reads, in one-letter code: Glycine--tRNA ligase beta subunit (684 aa).

Belongs to the class-II aminoacyl-tRNA synthetase family. Tetramer of two alpha and two beta subunits.

Its subcellular location is the cytoplasm. It catalyses the reaction tRNA(Gly) + glycine + ATP = glycyl-tRNA(Gly) + AMP + diphosphate. The chain is Glycine--tRNA ligase beta subunit from Stutzerimonas stutzeri (strain A1501) (Pseudomonas stutzeri).